Reading from the N-terminus, the 179-residue chain is Inner membrane-spanning protein YciB (179 aa).

The next 5 membrane-spanning stretches (helical) occupy residues 22 to 42 (IYAA…YSWV), 50 to 70 (MALI…FFHN), 76 to 96 (WKVT…QWVM), 121 to 141 (LAWA…AFWL), and 149 to 169 (FKVF…GVYI).

The protein belongs to the YciB family.

It localises to the cell inner membrane. In terms of biological role, plays a role in cell envelope biogenesis, maintenance of cell envelope integrity and membrane homeostasis. The protein is Inner membrane-spanning protein YciB of Escherichia fergusonii (strain ATCC 35469 / DSM 13698 / CCUG 18766 / IAM 14443 / JCM 21226 / LMG 7866 / NBRC 102419 / NCTC 12128 / CDC 0568-73).